The sequence spans 344 residues: MRKLFLDAFGEKKLDKPPVWIMRQAGRYLPEYRAVRVKFDNFMDMCRNADACCEVALHPLQRYDLDAAIVFSDILTIPEAMGMDLKFIKGAGPVFSEPIQSQKDLDKLKSIEDSIGSLDYVYNAVKTTSSAINVPLIGFTGSPWTLAAYMIEGSGSKQFNKLRKMMYANPQLMHSLLQRLADITIIYLLEQVKAGASSVMIFDTWGGILPLEHYKNFSLKYMEYIAKNVKQKINIPIVFFTKGGSNFFEEIKDKSCDGVGVDWSVTLKQARHRIGVGKVLQGNFDPAFLYGSKQSIRETVRANIEFIQSDKLNNYIVNLGHGIYPDIDPDSVRVMIDAIREFSA.

Substrate contacts are provided by residues 23–27 (RQAGR), aspartate 73, tyrosine 149, threonine 204, and histidine 321.

Belongs to the uroporphyrinogen decarboxylase family. In terms of assembly, homodimer.

The protein resides in the cytoplasm. It carries out the reaction uroporphyrinogen III + 4 H(+) = coproporphyrinogen III + 4 CO2. It functions in the pathway porphyrin-containing compound metabolism; protoporphyrin-IX biosynthesis; coproporphyrinogen-III from 5-aminolevulinate: step 4/4. Its function is as follows. Catalyzes the decarboxylation of four acetate groups of uroporphyrinogen-III to yield coproporphyrinogen-III. The sequence is that of Uroporphyrinogen decarboxylase from Francisella tularensis subsp. holarctica (strain LVS).